The primary structure comprises 701 residues: Elongation factor G (701 aa).

In terms of domain architecture, tr-type G spans 6 to 286 (KFTRNIGIAA…YVMELLPSPL (281 aa)). Residues 15 to 22 (AHIDAGKT), 83 to 87 (DTPGH), and 137 to 140 (NKMD) each bind GTP.

This sequence belongs to the TRAFAC class translation factor GTPase superfamily. Classic translation factor GTPase family. EF-G/EF-2 subfamily.

Its subcellular location is the cytoplasm. Functionally, catalyzes the GTP-dependent ribosomal translocation step during translation elongation. During this step, the ribosome changes from the pre-translocational (PRE) to the post-translocational (POST) state as the newly formed A-site-bound peptidyl-tRNA and P-site-bound deacylated tRNA move to the P and E sites, respectively. Catalyzes the coordinated movement of the two tRNA molecules, the mRNA and conformational changes in the ribosome. The protein is Elongation factor G of Cytophaga hutchinsonii (strain ATCC 33406 / DSM 1761 / CIP 103989 / NBRC 15051 / NCIMB 9469 / D465).